The sequence spans 465 residues: UDP-N-acetylmuramate--L-alanine ligase (465 aa).

An ATP-binding site is contributed by 112-118; that stretch reads GTHGKTT.

Belongs to the MurCDEF family.

Its subcellular location is the cytoplasm. The catalysed reaction is UDP-N-acetyl-alpha-D-muramate + L-alanine + ATP = UDP-N-acetyl-alpha-D-muramoyl-L-alanine + ADP + phosphate + H(+). It functions in the pathway cell wall biogenesis; peptidoglycan biosynthesis. Its function is as follows. Cell wall formation. This Burkholderia thailandensis (strain ATCC 700388 / DSM 13276 / CCUG 48851 / CIP 106301 / E264) protein is UDP-N-acetylmuramate--L-alanine ligase.